The chain runs to 402 residues: CinA-like protein (402 aa).

The protein belongs to the CinA family.

The chain is CinA-like protein from Deinococcus deserti (strain DSM 17065 / CIP 109153 / LMG 22923 / VCD115).